The primary structure comprises 693 residues: MPRKTPLHMVRNIGIAAHIDAGKTTTTERILYYTGVSHKIGEVHEGAATMDWMEQEKERGITITSAATTCFWKDHQINIIDTPGHVDFTIEVERSMRVLDGAVAVFCAVGGVQPQSETVWRQANKYRVPRIAFVNKMDRIGADFYNVEKQIRERLKANAVPIQIPIGAEDNFKGVIDLVKMKALVWDDEAALGSKYEEQEIPEDLREKAEEYREKMIESVVETDEALMEKYFAGEELTEEEIKSAIKKATIAIEIVPMLCGTAFKNKGVQPLLDAVIDYLPAPDEVDWIKGIDPKTGEEISVNPSDDEPFAGLAFKIMTDPFVGKLTFTRFYSGTITSGSYVLNATKNKKERVGRLLRMHSNKREEVNEFYSGEIGAIVGLKNTLTGDTLCDEKRPIILERMEFPDPVISVAVEPKTKADQEKMAIALQKLAEEDPSFRVTTDEESGQTIISGMGELHLEIIVDRLKREFKVECNTGKPQVAYRETFKNQVEQEYKYAKQSGGRGQYGHVFIRLIPQEPGKGYEFVDLIKGGVIPREYIPAVDKGIQEAAQGGVLAGFPVVDFKVELFDGSYHDVDSSEMAFKLAGSMAFKEGVKKANPVILEPIMKVEIEVPEEYMGDVIGDINRRRGQVNSMEDVHGIKKINAFVPLSEMFGYSTDLRSMTQGRGTYSMVFDHYEEVPSNIADEIIKERQG.

The tr-type G domain occupies 8–284 (HMVRNIGIAA…AVIDYLPAPD (277 aa)). GTP is bound by residues 17-24 (AHIDAGKT), 81-85 (DTPGH), and 135-138 (NKMD).

This sequence belongs to the TRAFAC class translation factor GTPase superfamily. Classic translation factor GTPase family. EF-G/EF-2 subfamily.

The protein localises to the cytoplasm. Catalyzes the GTP-dependent ribosomal translocation step during translation elongation. During this step, the ribosome changes from the pre-translocational (PRE) to the post-translocational (POST) state as the newly formed A-site-bound peptidyl-tRNA and P-site-bound deacylated tRNA move to the P and E sites, respectively. Catalyzes the coordinated movement of the two tRNA molecules, the mRNA and conformational changes in the ribosome. The polypeptide is Elongation factor G (Nautilia profundicola (strain ATCC BAA-1463 / DSM 18972 / AmH)).